Reading from the N-terminus, the 286-residue chain is Light-independent protochlorophyllide reductase iron-sulfur ATP-binding protein (286 aa).

Residues 10–15 (GIGKST) and K39 contribute to the ATP site. Residue S14 participates in Mg(2+) binding. 2 residues coordinate [4Fe-4S] cluster: C95 and C129. 180-181 (NR) is a binding site for ATP.

The protein belongs to the NifH/BchL/ChlL family. Homodimer. Protochlorophyllide reductase is composed of three subunits; ChlL, ChlN and ChlB. [4Fe-4S] cluster serves as cofactor.

It catalyses the reaction chlorophyllide a + oxidized 2[4Fe-4S]-[ferredoxin] + 2 ADP + 2 phosphate = protochlorophyllide a + reduced 2[4Fe-4S]-[ferredoxin] + 2 ATP + 2 H2O. It participates in porphyrin-containing compound metabolism; chlorophyll biosynthesis (light-independent). In terms of biological role, component of the dark-operative protochlorophyllide reductase (DPOR) that uses Mg-ATP and reduced ferredoxin to reduce ring D of protochlorophyllide (Pchlide) to form chlorophyllide a (Chlide). This reaction is light-independent. The L component serves as a unique electron donor to the NB-component of the complex, and binds Mg-ATP. In Synechococcus elongatus (strain ATCC 33912 / PCC 7942 / FACHB-805) (Anacystis nidulans R2), this protein is Light-independent protochlorophyllide reductase iron-sulfur ATP-binding protein.